Here is a 151-residue protein sequence, read N- to C-terminus: Small ribosomal subunit protein uS15 (151 aa).

This sequence belongs to the universal ribosomal protein uS15 family. As to quaternary structure, component of the small ribosomal subunit. Mature ribosomes consist of a small (40S) and a large (60S) subunit. The 40S subunit contains about 32 different proteins and 1 molecule of RNA (18S). The 60S subunit contains 45 different proteins and 3 molecules of RNA (25S, 5.8S and 5S).

It is found in the cytoplasm. In terms of biological role, component of the ribosome, a large ribonucleoprotein complex responsible for the synthesis of proteins in the cell. The small ribosomal subunit (SSU) binds messenger RNAs (mRNAs) and translates the encoded message by selecting cognate aminoacyl-transfer RNA (tRNA) molecules. The large subunit (LSU) contains the ribosomal catalytic site termed the peptidyl transferase center (PTC), which catalyzes the formation of peptide bonds, thereby polymerizing the amino acids delivered by tRNAs into a polypeptide chain. The nascent polypeptides leave the ribosome through a tunnel in the LSU and interact with protein factors that function in enzymatic processing, targeting, and the membrane insertion of nascent chains at the exit of the ribosomal tunnel. The protein is Small ribosomal subunit protein uS15 (RPS13) of Candida albicans (strain SC5314 / ATCC MYA-2876) (Yeast).